Here is a 229-residue protein sequence, read N- to C-terminus: Small ribosomal subunit protein uS3 (229 aa).

The KH type-2 domain occupies 18–87 (IDEYLAKQYY…NPQITITNVE (70 aa)).

Belongs to the universal ribosomal protein uS3 family. In terms of assembly, part of the 30S ribosomal subunit.

Its function is as follows. Binds the lower part of the 30S subunit head. The protein is Small ribosomal subunit protein uS3 of Saccharolobus solfataricus (strain ATCC 35092 / DSM 1617 / JCM 11322 / P2) (Sulfolobus solfataricus).